The chain runs to 203 residues: Mpv17-like protein (203 aa).

Topologically, residues 1-12 are cytoplasmic; the sequence is MRILIQFTKRHP. Residues 13–30 form a helical membrane-spanning segment; the sequence is WLTNVTIYGSLFASADIV. Residues 31–49 lie on the Lumenal side of the membrane; it reads QQKLSKSPTEPIDFKQTAK. A helical membrane pass occupies residues 50–69; the sequence is VGLVGFCFHANFNFFWLRFI. Topologically, residues 70–89 are cytoplasmic; the sequence is ERTFPGSAPLNVIRKVACDQ. The chain crosses the membrane as a helical span at residues 90-107; that stretch reads LMAAPITISAFYTGLSLL. Over 108–143 the chain is Lumenal; that stretch reads DGERDVFKNLKEKFWPTYKTGVMCWTVFQTINFSVI. Residues 144–166 form a helical membrane-spanning segment; the sequence is PPFVRTAYIGVCAFLWTTFLCYI. The Cytoplasmic portion of the chain corresponds to 167 to 203; that stretch reads RNRDINEVTTRLLHAVPNIRGKMAFPQDQDDNKPADK.

Belongs to the peroxisomal membrane protein PXMP2/4 family.

The protein localises to the peroxisome membrane. Its function is as follows. Participates in reactive oxygen species metabolism by up- or down-regulation of the genes of antioxidant enzymes. Protective against the mitochondrial apoptotic cascade. The chain is Mpv17-like protein (mpv17l) from Xenopus laevis (African clawed frog).